Here is a 329-residue protein sequence, read N- to C-terminus: D-alanine--D-alanine ligase (329 aa).

An ATP-grasp domain is found at 120 to 326; it reads KLWLSAIGIP…FAHYLEQILR (207 aa). 150-205 serves as a coordination point for ATP; sequence ALAKWGKVFIKAASQGSSVGCYSASNETDLLQGIKDAFGYSEQVLIEKAVKPRELE. Mg(2+) contacts are provided by D280, E293, and N295.

Belongs to the D-alanine--D-alanine ligase family. Mg(2+) serves as cofactor. Mn(2+) is required as a cofactor.

Its subcellular location is the cytoplasm. It carries out the reaction 2 D-alanine + ATP = D-alanyl-D-alanine + ADP + phosphate + H(+). It functions in the pathway cell wall biogenesis; peptidoglycan biosynthesis. Its function is as follows. Cell wall formation. The protein is D-alanine--D-alanine ligase of Aeromonas salmonicida (strain A449).